Reading from the N-terminus, the 561-residue chain is Phosphoinositide phospholipase C 1 (561 aa).

Residues 21-54 form the EF-hand domain; sequence EPPEEIKNLFHDYSQDDRMSADEMLRFVIQVQGE. One can recognise a PI-PLC X-box domain in the interval 105–249; that stretch reads QDMNQPLSHY…LKNKILISTK (145 aa). Active-site residues include His120 and His166. A compositionally biased stretch (polar residues) spans 256–266; sequence QTQISKGSTTD. The segment at 256 to 285 is disordered; that stretch reads QTQISKGSTTDESTRAKKISDAEEQVQEED. Residues 267–276 show a composition bias toward basic and acidic residues; the sequence is ESTRAKKISD. The PI-PLC Y-box domain maps to 294 to 410; the sequence is RDLISIHAGN…GYVKKPDVLL (117 aa). Positions 414–541 constitute a C2 domain; it reads PEGEIFDPCS…PGIRAVRLHD (128 aa). Ca(2+) contacts are provided by Asp452, Asp458, Asp510, Asp512, and Asp518.

Ca(2+) serves as cofactor. Expressed in stems, leaves, roots, flowers and siliques. Predominant in the vascular tissues of roots and leaves.

It localises to the cell membrane. It catalyses the reaction a 1,2-diacyl-sn-glycero-3-phospho-(1D-myo-inositol-4,5-bisphosphate) + H2O = 1D-myo-inositol 1,4,5-trisphosphate + a 1,2-diacyl-sn-glycerol + H(+). In terms of biological role, the production of the second messenger molecules diacylglycerol (DAG) and inositol 1,4,5-trisphosphate (IP3) is mediated by activated phosphatidylinositol-specific phospholipase C enzymes. Required for secondary responses to abscisic acid signals. The polypeptide is Phosphoinositide phospholipase C 1 (PLC1) (Arabidopsis thaliana (Mouse-ear cress)).